The following is a 687-amino-acid chain: Guanine-nucleotide exchange factor YEL1 (687 aa).

In terms of domain architecture, SEC7 spans 57–264; sequence ILQNKEAAND…SEYYKTLNET (208 aa). The tract at residues 63 to 97 is disordered; sequence AANDEKPVIPTTDTATAGTGTEDISSTQSEETDQN. Low complexity predominate over residues 73–83; the sequence is TTDTATAGTGT. A Phosphothreonine modification is found at Thr-290. 2 positions are modified to phosphoserine: Ser-293 and Ser-299. Residues 412-551 form the PH domain; that stretch reads TSRRTSLSYL…DCINFWAGRI (140 aa).

This sequence belongs to the YEL1 family.

It is found in the cytoplasm. Its subcellular location is the cell membrane. It localises to the bud neck. The protein localises to the bud tip. In terms of biological role, guanine nucleotide exchange factor for ARF3 required for localization of ARF3 to the bud neck and tip and involved in actin patch polarization. This chain is Guanine-nucleotide exchange factor YEL1 (YEL1), found in Saccharomyces cerevisiae (strain JAY291) (Baker's yeast).